The chain runs to 359 residues: MITVNVDLGERAYPIHIGADLIGRTELFAPHIAGASVTIVTNTTVEPLYGDTLRAALAPLGKRVSTVVLPDGEAYKNWETLNLIFDGLLEQHADRKTTLIALGGGVIGDMTGFAAACYMRGVPFIQVPTTLLSQVDSSVGGKTGINHPLGKNMIGAFYQPQAVIADIGALSTLPDRELAAGVAEIVKTGAIADAAFFDWIEANVGALTRRDPDALAHAVKRSCEIKAGVVAADEREGGLRAILNFGHTFGHAIEAGLGYGEWLHGEAVGCGMVMAADLSVRTGHLDEASRARLCRVVEAAHLPTRAPDLGDARYVELMRVDKKAEAGAIKFILLKRFGETIITPAPDDAVLATLAATTR.

NAD(+) is bound by residues 71 to 76 (DGEAYK), 105 to 109 (GVIGD), 129 to 130 (TT), Lys142, and Lys151. Glu184, His247, and His264 together coordinate Zn(2+).

The protein belongs to the sugar phosphate cyclases superfamily. Dehydroquinate synthase family. The cofactor is Co(2+). It depends on Zn(2+) as a cofactor. NAD(+) serves as cofactor.

Its subcellular location is the cytoplasm. The catalysed reaction is 7-phospho-2-dehydro-3-deoxy-D-arabino-heptonate = 3-dehydroquinate + phosphate. Its pathway is metabolic intermediate biosynthesis; chorismate biosynthesis; chorismate from D-erythrose 4-phosphate and phosphoenolpyruvate: step 2/7. Functionally, catalyzes the conversion of 3-deoxy-D-arabino-heptulosonate 7-phosphate (DAHP) to dehydroquinate (DHQ). The protein is 3-dehydroquinate synthase of Burkholderia mallei (strain NCTC 10247).